The chain runs to 427 residues: 3-phosphoshikimate 1-carboxyvinyltransferase (427 aa).

Positions 20, 21, and 25 each coordinate 3-phosphoshikimate. Phosphoenolpyruvate is bound at residue K20. The phosphoenolpyruvate site is built by G92 and R120. 4 residues coordinate 3-phosphoshikimate: S166, Q168, D312, and K339. Q168 contributes to the phosphoenolpyruvate binding site. D312 (proton acceptor) is an active-site residue. R343 and R385 together coordinate phosphoenolpyruvate.

Belongs to the EPSP synthase family. Monomer.

Its subcellular location is the cytoplasm. It catalyses the reaction 3-phosphoshikimate + phosphoenolpyruvate = 5-O-(1-carboxyvinyl)-3-phosphoshikimate + phosphate. Its pathway is metabolic intermediate biosynthesis; chorismate biosynthesis; chorismate from D-erythrose 4-phosphate and phosphoenolpyruvate: step 6/7. Catalyzes the transfer of the enolpyruvyl moiety of phosphoenolpyruvate (PEP) to the 5-hydroxyl of shikimate-3-phosphate (S3P) to produce enolpyruvyl shikimate-3-phosphate and inorganic phosphate. The protein is 3-phosphoshikimate 1-carboxyvinyltransferase of Streptococcus agalactiae serotype III (strain NEM316).